Here is a 265-residue protein sequence, read N- to C-terminus: MALQIPSLLLSAAVVVLMVLSSPGTEGGDSERHFVYQFMGECYFTNGTQRIRYVTRYIYNREEYVRYDSDVGEHRAVTELGRPDAEYWNSQPEILERTRAELDTVCRHNYEGPETHTSLRRLEQPNVVISLSRTEALNHHNTLVCSVTDFYPAKIKVRWFRNGQEETVGVSSTQLIRNGDWTFQVLVMLEMTPRRGEVYTCHVEHPSLKSPITVEWRAQSESAWSKMLSGIGGCVLGVIFLGLGLFIRHRSQKGPRGPPPAGLLQ.

The first 27 residues, 1–27 (MALQIPSLLLSAAVVVLMVLSSPGTEG), serve as a signal peptide directing secretion. Positions 28-122 (GDSERHFVYQ…PETHTSLRRL (95 aa)) are beta-1. At 28–226 (GDSERHFVYQ…RAQSESAWSK (199 aa)) the chain is on the extracellular side. Cystine bridges form between Cys42–Cys106 and Cys145–Cys201. Residue Asn46 is glycosylated (N-linked (GlcNAc...) asparagine). Residues 123-216 (EQPNVVISLS…SLKSPITVEW (94 aa)) are beta-2. In terms of domain architecture, Ig-like C1-type spans 125 to 213 (PNVVISLSRT…EHPSLKSPIT (89 aa)). The connecting peptide stretch occupies residues 217-226 (RAQSESAWSK). Residues 227–247 (MLSGIGGCVLGVIFLGLGLFI) form a helical membrane-spanning segment. Residues 248–265 (RHRSQKGPRGPPPAGLLQ) lie on the Cytoplasmic side of the membrane.

Belongs to the MHC class II family. Ubiquitinated in immature dendritic cells leading to down-regulation of MHC class II.

The protein localises to the membrane. In Mus musculus (Mouse), this protein is H-2 class II histocompatibility antigen, A beta chain (H2-Ab1).